A 229-amino-acid polypeptide reads, in one-letter code: GTP cyclohydrolase 1 (229 aa).

Residues 1 to 26 (MDAKIKPIRGTNPAEGRPEFQPAELE) are disordered. Zn(2+)-binding residues include C118, H121, and C189.

Belongs to the GTP cyclohydrolase I family. Toroid-shaped homodecamer, composed of two pentamers of five dimers.

The enzyme catalyses GTP + H2O = 7,8-dihydroneopterin 3'-triphosphate + formate + H(+). Its pathway is cofactor biosynthesis; 7,8-dihydroneopterin triphosphate biosynthesis; 7,8-dihydroneopterin triphosphate from GTP: step 1/1. The polypeptide is GTP cyclohydrolase 1 (Rhodopseudomonas palustris (strain ATCC BAA-98 / CGA009)).